The sequence spans 1397 residues: ABC transporter G family member 41 (1397 aa).

The ABC transporter 1 domain maps to 138 to 411 (SLSKFVCSKK…FEGCGFKCPE (274 aa)). 171–178 (GPPGCGKT) contributes to the ATP binding site. Positions 489-701 (EMLKACSRRE…AEIGLTANEF (213 aa)) constitute an ABC transmembrane type-2 1 domain. Helical transmembrane passes span 507–527 (FIYL…MTVF), 549–570 (ALFR…RLGV), 594–614 (IPLS…VIGY), 625–645 (FIIL…IASI), 651–671 (ACSI…GFVI), and 735–755 (TAFG…TLAL). Residues 805–1050 (VTFQNVQYYI…VIKYFESIPG (246 aa)) enclose the ABC transporter 2 domain. 842–849 (GVSGAGKT) is an ATP binding site. The 215-residue stretch at 1122-1336 (GQLKACLWKQ…VLEGLLSSQY (215 aa)) folds into the ABC transmembrane type-2 2 domain. Helical transmembrane passes span 1141 to 1161 (HNLT…LLFW), 1173 to 1193 (LFSI…NNCA), 1229 to 1249 (VPYS…MIGY), 1260 to 1280 (LYSI…MVAL), 1286 to 1306 (MALT…GFVM), 1314 to 1334 (WWIW…LLSS), and 1369 to 1389 (VVAF…AFFM).

Belongs to the ABC transporter superfamily. ABCG family. PDR (TC 3.A.1.205) subfamily. In terms of tissue distribution, confined to roots.

It is found in the membrane. Functionally, may be a general defense protein. This chain is ABC transporter G family member 41 (ABCG41), found in Arabidopsis thaliana (Mouse-ear cress).